Consider the following 172-residue polypeptide: RNA pyrophosphohydrolase (172 aa).

Residues 8-153 (QHRPNVGVVL…KRGVYEAVVA (146 aa)) enclose the Nudix hydrolase domain. The Nudix box motif lies at 43 to 64 (GGVDEGEDLEVAARRELAEETG).

The protein belongs to the Nudix hydrolase family. RppH subfamily. A divalent metal cation serves as cofactor.

Accelerates the degradation of transcripts by removing pyrophosphate from the 5'-end of triphosphorylated RNA, leading to a more labile monophosphorylated state that can stimulate subsequent ribonuclease cleavage. This chain is RNA pyrophosphohydrolase, found in Caulobacter vibrioides (strain ATCC 19089 / CIP 103742 / CB 15) (Caulobacter crescentus).